The sequence spans 381 residues: GDP-mannose-dependent alpha-(1-6)-phosphatidylinositol dimannoside mannosyltransferase (381 aa).

Substrate is bound by residues Gly16, Arg207, 211–212 (EK), 283–287 (ETFGL), and Glu291.

Belongs to the glycosyltransferase group 1 family. Glycosyltransferase 4 subfamily.

It functions in the pathway phospholipid metabolism; phosphatidylinositol metabolism. Catalyzes the addition of a mannose residue from GDP-D-mannose to the position 6 of the alpha-1,6-linked mannose residue of the triacyl phosphatidylinositol dimannoside (Ac3PIM2) to generate triacyl phosphatidylinositol trimannoside (Ac3PIM3). This is GDP-mannose-dependent alpha-(1-6)-phosphatidylinositol dimannoside mannosyltransferase (pimC) from Mycobacterium tuberculosis (strain ATCC 25177 / H37Ra).